A 34-amino-acid polypeptide reads, in one-letter code: Cytochrome c oxidase polypeptide 2A (34 aa).

The residue at position 1 (methionine 1) is an N-formylmethionine. Residues 4-34 traverse the membrane as a helical segment; it reads KPKGALAVILVLTLTILVFWLGVYAVFFARG.

The protein localises to the cell membrane. It carries out the reaction 4 Fe(II)-[cytochrome c] + O2 + 8 H(+)(in) = 4 Fe(III)-[cytochrome c] + 2 H2O + 4 H(+)(out). This is Cytochrome c oxidase polypeptide 2A (cbaD) from Thermus thermophilus (strain ATCC 27634 / DSM 579 / HB8).